A 360-amino-acid polypeptide reads, in one-letter code: Mitogen-activated protein kinase 14 (360 aa).

At Ser-2 the chain carries N-acetylserine. A Phosphoserine modification is found at Ser-2. Thr-16 carries the post-translational modification Phosphothreonine. Residues 24-308 (YQNLSPVGSG…AAQALAHAYF (285 aa)) enclose the Protein kinase domain. ATP is bound by residues 30-38 (VGSGAYGSV) and Lys-53. Lys-53 and Lys-152 each carry N6-acetyllysine. Asp-168 (proton acceptor) is an active-site residue. Residue Thr-180 is modified to Phosphothreonine; by MAP2K3, MAP2K4, MAP2K6 and autocatalysis. Positions 180–182 (TGY) match the TXY motif. Phosphotyrosine; by MAP2K3, MAP2K4, MAP2K6 and autocatalysis is present on Tyr-182. Thr-263 is subject to Phosphothreonine. Tyr-323 carries the post-translational modification Phosphotyrosine; by ZAP70.

Belongs to the protein kinase superfamily. CMGC Ser/Thr protein kinase family. MAP kinase subfamily. In terms of assembly, component of a signaling complex containing at least AKAP13, PKN1, MAPK14, ZAK and MAP2K3. Within this complex, AKAP13 interacts directly with PKN1, which in turn recruits MAPK14, MAP2K3 and ZAK. Binds to a kinase interaction motif within the protein tyrosine phosphatase, PTPRR. This interaction retains MAPK14 in the cytoplasm and prevents nuclear accumulation. Interacts with SPAG9 and GADD45A. Interacts with CDC25B, CDC25C, DUSP1, DUSP10, DUSP16, NP60, SUPT20H and TAB1. Interacts with casein kinase II subunits CSNK2A1 and CSNK2B. Interacts with PPM1D. Interacts with CDK5RAP3; recruits PPM1D to MAPK14 and may regulate its dephosphorylation. Interacts with DUSP2; this interaction does not lead to catalytic activation of DUSP2 and dephosphrylation of MAPK14. Requires Mg(2+) as cofactor. In terms of processing, dually phosphorylated on Thr-180 and Tyr-182 by the MAP2Ks MAP2K3/MKK3, MAP2K4/MKK4 and MAP2K6/MKK6 in response to inflammatory citokines, environmental stress or growth factors, which activates the enzyme. Dual phosphorylation can also be mediated by TAB1-mediated autophosphorylation. TCR engagement in T-cells also leads to Tyr-323 phosphorylation by ZAP70. Dephosphorylated and inactivated by DUPS1, DUSP10 and DUSP16. PPM1D also mediates dephosphorylation and inactivation of MAPK14. Post-translationally, acetylated at Lys-53 and Lys-152 by KAT2B and EP300. Acetylation at Lys-53 increases the affinity for ATP and enhances kinase activity. Lys-53 and Lys-152 are deacetylated by HDAC3. Ubiquitinated. Ubiquitination leads to degradation by the proteasome pathway. Brain, heart, placenta, pancreas and skeletal muscle. Expressed to a lesser extent in lung, liver and kidney.

It localises to the cytoplasm. It is found in the nucleus. The catalysed reaction is L-seryl-[protein] + ATP = O-phospho-L-seryl-[protein] + ADP + H(+). The enzyme catalyses L-threonyl-[protein] + ATP = O-phospho-L-threonyl-[protein] + ADP + H(+). Activated by cell stresses such as DNA damage, heat shock, osmotic shock, anisomycin and sodium arsenite, as well as pro-inflammatory stimuli such as bacterial lipopolysaccharide (LPS) and interleukin-1. Activation occurs through dual phosphorylation of Thr-180 and Tyr-182 by either of two dual specificity kinases, MAP2K3/MKK3 or MAP2K6/MKK6, and potentially also MAP2K4/MKK4, as well as by TAB1-mediated autophosphorylation. MAPK14 phosphorylated on both Thr-180 and Tyr-182 is 10-20-fold more active than MAPK14 phosphorylated only on Thr-180, whereas MAPK14 phosphorylated on Tyr-182 alone is inactive. whereas Thr-180 is necessary for catalysis, Tyr-182 may be required for auto-activation and substrate recognition. Phosphorylated at Tyr-323 by ZAP70 in an alternative activation pathway in response to TCR signaling in T-cells. This alternative pathway is inhibited by GADD45A. Inhibited by dual specificity phosphatases, such as DUSP1, DUSP10, and DUSP16. Specifically inhibited by the binding of pyridinyl-imidazole compounds, which are cytokine-suppressive anti-inflammatory drugs (CSAID). Isoform Mxi2 is 100-fold less sensitive to these agents than the other isoforms and is not inhibited by DUSP1. Isoform Exip is not activated by MAP2K6. SB203580 is an inhibitor of MAPK14. In terms of biological role, serine/threonine kinase which acts as an essential component of the MAP kinase signal transduction pathway. MAPK14 is one of the four p38 MAPKs which play an important role in the cascades of cellular responses evoked by extracellular stimuli such as pro-inflammatory cytokines or physical stress leading to direct activation of transcription factors. Accordingly, p38 MAPKs phosphorylate a broad range of proteins and it has been estimated that they may have approximately 200 to 300 substrates each. Some of the targets are downstream kinases which are activated through phosphorylation and further phosphorylate additional targets. RPS6KA5/MSK1 and RPS6KA4/MSK2 can directly phosphorylate and activate transcription factors such as CREB1, ATF1, the NF-kappa-B isoform RELA/NFKB3, STAT1 and STAT3, but can also phosphorylate histone H3 and the nucleosomal protein HMGN1. RPS6KA5/MSK1 and RPS6KA4/MSK2 play important roles in the rapid induction of immediate-early genes in response to stress or mitogenic stimuli, either by inducing chromatin remodeling or by recruiting the transcription machinery. On the other hand, two other kinase targets, MAPKAPK2/MK2 and MAPKAPK3/MK3, participate in the control of gene expression mostly at the post-transcriptional level, by phosphorylating ZFP36 (tristetraprolin) and ELAVL1, and by regulating EEF2K, which is important for the elongation of mRNA during translation. MKNK1/MNK1 and MKNK2/MNK2, two other kinases activated by p38 MAPKs, regulate protein synthesis by phosphorylating the initiation factor EIF4E2. MAPK14 also interacts with casein kinase II, leading to its activation through autophosphorylation and further phosphorylation of TP53/p53. In the cytoplasm, the p38 MAPK pathway is an important regulator of protein turnover. For example, CFLAR is an inhibitor of TNF-induced apoptosis whose proteasome-mediated degradation is regulated by p38 MAPK phosphorylation. In a similar way, MAPK14 phosphorylates the ubiquitin ligase SIAH2, regulating its activity towards EGLN3. MAPK14 may also inhibit the lysosomal degradation pathway of autophagy by interfering with the intracellular trafficking of the transmembrane protein ATG9. Another function of MAPK14 is to regulate the endocytosis of membrane receptors by different mechanisms that impinge on the small GTPase RAB5A. In addition, clathrin-mediated EGFR internalization induced by inflammatory cytokines and UV irradiation depends on MAPK14-mediated phosphorylation of EGFR itself as well as of RAB5A effectors. Ectodomain shedding of transmembrane proteins is regulated by p38 MAPKs as well. In response to inflammatory stimuli, p38 MAPKs phosphorylate the membrane-associated metalloprotease ADAM17. Such phosphorylation is required for ADAM17-mediated ectodomain shedding of TGF-alpha family ligands, which results in the activation of EGFR signaling and cell proliferation. Another p38 MAPK substrate is FGFR1. FGFR1 can be translocated from the extracellular space into the cytosol and nucleus of target cells, and regulates processes such as rRNA synthesis and cell growth. FGFR1 translocation requires p38 MAPK activation. In the nucleus, many transcription factors are phosphorylated and activated by p38 MAPKs in response to different stimuli. Classical examples include ATF1, ATF2, ATF6, ELK1, PTPRH, DDIT3, TP53/p53 and MEF2C and MEF2A. The p38 MAPKs are emerging as important modulators of gene expression by regulating chromatin modifiers and remodelers. The promoters of several genes involved in the inflammatory response, such as IL6, IL8 and IL12B, display a p38 MAPK-dependent enrichment of histone H3 phosphorylation on 'Ser-10' (H3S10ph) in LPS-stimulated myeloid cells. This phosphorylation enhances the accessibility of the cryptic NF-kappa-B-binding sites marking promoters for increased NF-kappa-B recruitment. Phosphorylates CDC25B and CDC25C which is required for binding to 14-3-3 proteins and leads to initiation of a G2 delay after ultraviolet radiation. Phosphorylates TIAR following DNA damage, releasing TIAR from GADD45A mRNA and preventing mRNA degradation. The p38 MAPKs may also have kinase-independent roles, which are thought to be due to the binding to targets in the absence of phosphorylation. Protein O-Glc-N-acylation catalyzed by the OGT is regulated by MAPK14, and, although OGT does not seem to be phosphorylated by MAPK14, their interaction increases upon MAPK14 activation induced by glucose deprivation. This interaction may regulate OGT activity by recruiting it to specific targets such as neurofilament H, stimulating its O-Glc-N-acylation. Required in mid-fetal development for the growth of embryo-derived blood vessels in the labyrinth layer of the placenta. Also plays an essential role in developmental and stress-induced erythropoiesis, through regulation of EPO gene expression. Isoform MXI2 activation is stimulated by mitogens and oxidative stress and only poorly phosphorylates ELK1 and ATF2. Isoform EXIP may play a role in the early onset of apoptosis. Phosphorylates S100A9 at 'Thr-113'. Phosphorylates NLRP1 downstream of MAP3K20/ZAK in response to UV-B irradiation and ribosome collisions, promoting activation of the NLRP1 inflammasome and pyroptosis. (Microbial infection) Activated by phosphorylation by M.tuberculosis EsxA in T-cells leading to inhibition of IFN-gamma production; phosphorylation is apparent within 15 minutes and is inhibited by kinase-specific inhibitors SB203580 and siRNA. The sequence is that of Mitogen-activated protein kinase 14 from Homo sapiens (Human).